The sequence spans 130 residues: Phosphoribosyl-AMP cyclohydrolase (130 aa).

Asp-77 serves as a coordination point for Mg(2+). Zn(2+) is bound at residue Cys-78. 2 residues coordinate Mg(2+): Asp-79 and Asp-81. 2 residues coordinate Zn(2+): Cys-95 and Cys-102.

It belongs to the PRA-CH family. In terms of assembly, homodimer. Mg(2+) is required as a cofactor. The cofactor is Zn(2+).

It localises to the cytoplasm. It catalyses the reaction 1-(5-phospho-beta-D-ribosyl)-5'-AMP + H2O = 1-(5-phospho-beta-D-ribosyl)-5-[(5-phospho-beta-D-ribosylamino)methylideneamino]imidazole-4-carboxamide. It participates in amino-acid biosynthesis; L-histidine biosynthesis; L-histidine from 5-phospho-alpha-D-ribose 1-diphosphate: step 3/9. Its function is as follows. Catalyzes the hydrolysis of the adenine ring of phosphoribosyl-AMP. The chain is Phosphoribosyl-AMP cyclohydrolase from Pseudomonas syringae pv. syringae (strain B728a).